The sequence spans 1326 residues: MNFNNELSDLKNRFLFRTLRVQEYSDVARDRIDFFIWELKFLNCVLHLQSFTFASECGMLDISQKMLEICKRFNTPPPHNAFAYWKEVICKRLCAISIRPDASSDDGFACWKKVIWKTKQEFRAKYSFPKTLLADNKVYDDTNPKFVMEFIDAVVGNLNVLVKINDPSSLHFVPGPKEQIEQVLKELKLLRFFVCFVSNKCTEPQYQYTTFYTHALIEASHIAMVVWLNLPIYGNRNQDLASNEVSCLFSDFMEMKIKSIQPGISRNNIYINVLRALKSTIPHAQDKHAAESGIVETPTHNLMVGLSDQMANLQEMLCLLRDNLIHLPILDLEFHLQDMDSVILDVGLLIYSFYDMKGEKEDTTLEDINRELGFDLPRNIEPIKAMVYLVMQKAFHCNLPRVHGLGYADFLLKNLKDFQGRYSDSLAFLKNQLQVIQTEFESLQPFLKVVVEEPHNKFKRLNEDCAIQIIRKAHEVEYVVDACINKGIPHWCLERWLQDIIEEITCIKAKIQEKNTVDDTMKTVIVRTSSKLARTPRMKEEIVGFEDIIENLRKKLLNGTKGQDVISIHGMPGLGKTTLANRLYSDRSVVSQFDICAQCCVSQVYSYKDLLLSLLCDTIGEESERRELPDNELADMLRKTLLPRRYLILVDDVWENSVWDDLRGCFPDTNNRSRIILTTRHHEVAKYASVHIDPLHLRMFDENESWKFLEKNVFGEESCSPLLRDVGQRIAKMCGQLPFSIVLVAGIPSEMEKEVECWEQVANNLGTRIHNDSRAIVDQSYHVLPCHLKSCFLYFAAFLEDVVIYISRLLRLWISEAFIKSSEGRSLEDIAEGYLENLIGRNLVMVTQRADSDGKVKTCRLHDVLLDFCKKRAAEENFLLWINRDLITKPFSCVYSHKQHAHLAFTEMHNLVEWSASCSFVGSVVLSKKYEPYFSIDLYSFYDFAISRNLPNFKFLKVLDLEHQVFIDFIPTELVYLKYFSAHIKQNSIPSSIYNLWNPETLKLKRPRHVRRCTLLLPSTVWDMVKLRHLYIPDFSTENEEALLENSAKLYDLETLSTPYFSRYHVLNFPIRLEILKLYRSKAFKTIPFCISAPNLKYLKLSGFYLDSQYLSETADHLKNLEVLKLYYVEFGDHREWKVSNGMFPQLKILKLEYLSLMKWIVADDAFPNLEQLYIKVENCNELVVKSAMNIQETQVEDNQNTNFKLVLIEKKTLKLNLSHDEDIPKAFKRLFLCPGIESVSTDRKEKKLTVTGDVDAGSSISCGETEKAWHARVVVPTCQHKCGIVILLTSNELGLGREERKKRRKRRKRRAIKEIIVDIVGGDPY.

Coiled coils occupy residues 421–444 (RYSDSLAFLKNQLQVIQTEFESLQ) and 536–558 (PRMKEEIVGFEDIIENLRKKLLN). 570-577 (GMPGLGKT) provides a ligand contact to ATP. The 254-residue stretch at 611–864 (LLSLLCDTIG…KVKTCRLHDV (254 aa)) folds into the NB-ARC domain. The stretch at 749–770 (SEMEKEVECWEQVANNLGTRIH) forms a coiled coil. LRR repeat units lie at residues 953 to 978 (FKFLKVLDLEHQVFIDFIPTELVYLK), 980 to 996 (FSAHIKQNSIPSSIYNL), 1027 to 1050 (LRHLYIPDFSTENEEALLENSAKL), 1053 to 1070 (LETLSTPYFSRYHVLNFP), 1071 to 1094 (IRLEILKLYRSKAFKTIPFCISAP), 1098 to 1118 (YLKLSGFYLDSQYLSETADHL), 1119 to 1146 (KNLEVLKLYYVEFGDHREWKVSNGMFPQ), 1167 to 1191 (FPNLEQLYIKVENCNELVVKSAMNI), and 1208 to 1230 (LIEKKTLKLNLSHDEDIPKAFKR). The region spanning 1209-1278 (IEKKTLKLNL…AWHARVVVPT (70 aa)) is the HMA domain.

Belongs to the disease resistance NB-LRR family.

The protein localises to the cytoplasm. It localises to the membrane. In terms of biological role, confers resistance to late blight (Phytophthora infestans) races carrying the avirulence gene Avr1. Resistance proteins guard the plant against pathogens that contain an appropriate avirulence protein via an indirect interaction with this avirulence protein. That triggers a defense system including the hypersensitive response, which restricts the pathogen growth. The chain is Putative late blight resistance protein homolog R1B-19 (R1B-19) from Solanum demissum (Wild potato).